The sequence spans 312 residues: G-protein coupled receptor BILF1 (312 aa).

The Extracellular segment spans residues 1–40; the sequence is MLSTMAPGSTVGTLVANMTSVNATEDACTKSYSAFLSGMT. Intrachain disulfides connect Cys28–Cys258 and Cys97–Cys174. The chain crosses the membrane as a helical span at residues 41-61; it reads SLLLVLLILLTLAGILFIIFV. The Cytoplasmic portion of the chain corresponds to 62–67; sequence RKLVHR. Residues 68–88 traverse the membrane as a helical segment; the sequence is MDVWLIALLIELLLWVLGKMI. Over 89–95 the chain is Extracellular; that stretch reads QEFSSTG. A helical membrane pass occupies residues 96–116; it reads LCLLTQNMMFLGLMCSVWTHL. The Cytoplasmic segment spans residues 117-138; that stretch reads GMALEKTLALFSRTPKRTSHRN. Residues 139-159 traverse the membrane as a helical segment; the sequence is VCLYLMGVFCLVLLLIIILLI. Topologically, residues 160–192 are extracellular; sequence TMGPDANLNRGPNMCREGPTKGMHTAVQGLKAG. Residues 193–213 form a helical membrane-spanning segment; that stretch reads CYLLAAVLIVLLTVIIIWKLL. Topologically, residues 214 to 228 are cytoplasmic; it reads RTKFGRKPRLICNVT. A helical membrane pass occupies residues 229–249; that stretch reads FTGLICAFSWFMLSLPLLFLG. Residues 250-269 lie on the Extracellular side of the membrane; it reads EAGSLGFDCTESLVARYYPG. Residues 270–290 form a helical membrane-spanning segment; sequence PAACLALLLIILYAWSFSHFM. The Cytoplasmic segment spans residues 291–312; the sequence is DSLKNQVTVTARYFRRVPSQST.

It belongs to the Epstein-Barr virus BILF1 protein family. Interacts with host CXCR4 to form higher-order heterooligomers. Interacts with host Gi heterotrimer.

Its subcellular location is the host cell membrane. The protein localises to the host mitochondrion outer membrane. Its function is as follows. Constitutively active, ligand-independent G protein-coupled receptor that has immunoevasive and oncogenic activities. Couples with the host inhibitory G protein (Gi) in order to disrupt the host chemokine signaling. As a consequence of its constitutive activity, mediates host CXCR4 inhibition. Enhances degradation of host major histocompatibility complex class I antigens via lysosomes, thereby modulating the antigen presentation to cytotoxic T cells. Targets selectively HLA-A, HLA-Band HLA-E molecules. Targets also newly synthesized MHC-I/peptide complexes en route to the host cell surface. Inhibits the host EIF2AK2/PKR phosphorylation. Displays tranforming activity. Utilizes its C-terminal tail to trigger host MAVS UFMylation via PARK2, resulting in selective MAVS removal from mitochondrial membranes and routing to lysosomes to prevent viral activation of the NLRP3 inflammasome. The protein is G-protein coupled receptor BILF1 of Homo sapiens (Human).